A 316-amino-acid polypeptide reads, in one-letter code: Methionyl-tRNA formyltransferase (316 aa).

114–117 serves as a coordination point for (6S)-5,6,7,8-tetrahydrofolate; the sequence is SLLP.

The protein belongs to the Fmt family.

The catalysed reaction is L-methionyl-tRNA(fMet) + (6R)-10-formyltetrahydrofolate = N-formyl-L-methionyl-tRNA(fMet) + (6S)-5,6,7,8-tetrahydrofolate + H(+). In terms of biological role, attaches a formyl group to the free amino group of methionyl-tRNA(fMet). The formyl group appears to play a dual role in the initiator identity of N-formylmethionyl-tRNA by promoting its recognition by IF2 and preventing the misappropriation of this tRNA by the elongation apparatus. The protein is Methionyl-tRNA formyltransferase of Aromatoleum aromaticum (strain DSM 19018 / LMG 30748 / EbN1) (Azoarcus sp. (strain EbN1)).